Reading from the N-terminus, the 37-residue chain is U12-myrmicitoxin-Mri1a (37 aa).

The signal sequence occupies residues 1–23 (MKTIELITIFAMITTLMVTVVAG). A propeptide spanning residues 24–25 (DP) is cleaved from the precursor. Val-35 carries the post-translational modification Valine amide.

Expressed by the venom gland.

It localises to the secreted. Functionally, toxin that induces mild paralysis, and reduces survival and reproduction when injected into aphids (A.pisum). May affect various processes in the aphid, including wound healing and hemolymph coagulation. It does not increase the sensitivity of the aphids to the chemical insecticides imidacloprid, methomyl and Spirotetramat. Has no insecticidal activity when injected into blowfly (L.caesar). Does not display any antibacterial or antifungal activity. The protein is U12-myrmicitoxin-Mri1a of Manica rubida (European giant red ant).